The sequence spans 484 residues: UDP-N-acetylmuramoyl-L-alanyl-D-glutamate--2,6-diaminopimelate ligase (484 aa).

Ser-30 is a binding site for UDP-N-acetyl-alpha-D-muramoyl-L-alanyl-D-glutamate. Residue 111–117 (GTNGKTT) coordinates ATP. Residues 153–154 (TT), Ser-180, Gln-186, and Arg-188 each bind UDP-N-acetyl-alpha-D-muramoyl-L-alanyl-D-glutamate. An N6-carboxylysine modification is found at Lys-220. Meso-2,6-diaminopimelate-binding positions include Arg-378, 402-405 (DNPR), Gly-455, and Glu-459. The short motif at 402 to 405 (DNPR) is the Meso-diaminopimelate recognition motif element.

This sequence belongs to the MurCDEF family. MurE subfamily. Mg(2+) is required as a cofactor. Post-translationally, carboxylation is probably crucial for Mg(2+) binding and, consequently, for the gamma-phosphate positioning of ATP.

It is found in the cytoplasm. The enzyme catalyses UDP-N-acetyl-alpha-D-muramoyl-L-alanyl-D-glutamate + meso-2,6-diaminopimelate + ATP = UDP-N-acetyl-alpha-D-muramoyl-L-alanyl-gamma-D-glutamyl-meso-2,6-diaminopimelate + ADP + phosphate + H(+). The protein operates within cell wall biogenesis; peptidoglycan biosynthesis. Catalyzes the addition of meso-diaminopimelic acid to the nucleotide precursor UDP-N-acetylmuramoyl-L-alanyl-D-glutamate (UMAG) in the biosynthesis of bacterial cell-wall peptidoglycan. In Phocaeicola vulgatus (strain ATCC 8482 / DSM 1447 / JCM 5826 / CCUG 4940 / NBRC 14291 / NCTC 11154) (Bacteroides vulgatus), this protein is UDP-N-acetylmuramoyl-L-alanyl-D-glutamate--2,6-diaminopimelate ligase.